Reading from the N-terminus, the 869-residue chain is Sodium-dependent phosphate transporter (869 aa).

Over 1–18 (MEAVAELSAPSLAGAPGE) the chain is Extracellular. A helical membrane pass occupies residues 19 to 39 (YTWIVAVAGVTCFLTAFAIGA). Residues 40 to 54 (NDVANTFSSSVGSRA) lie on the Cytoplasmic side of the membrane. A helical membrane pass occupies residues 55–75 (IPLWAAIGMSAVLETVGATLL). At 76–97 (GGAVTDSIRSKIIDFEVFRETP) the chain is on the extracellular side. Residues 98–118 (SILMTGMLCALVGAGLWLFLA) traverse the membrane as a helical segment. The Cytoplasmic portion of the chain corresponds to 119 to 120 (NH). A helical membrane pass occupies residues 121-141 (LGLPVSTTHSIIGALLGFGLA). The Extracellular portion of the chain corresponds to 142-154 (SGNVRAVKWTQVA). A helical membrane pass occupies residues 155–175 (FIVGSWVAAPLAASAAGATIF). The Cytoplasmic segment spans residues 176-196 (VCMRRLILRSRQPLRRAKRFL). A helical transmembrane segment spans residues 197–217 (WIFIYLITLTFSVFLVFKNFF). The Extracellular portion of the chain corresponds to 218–250 (ELNVSCDQMVAGGRVEHFEPCRISRWADAHSGT). The chain crosses the membrane as a helical span at residues 251–271 (ALGIAVALSVALTFVISCLVY). Residues 272-720 (RFAFYRVESY…SGSADSEIGS (449 aa)) lie on the Cytoplasmic side of the membrane. Disordered stretches follow at residues 286 to 312 (KRSS…GGLL), 374 to 401 (AAAA…GSSV), and 453 to 571 (SAFL…KRER). The segment covering 457–481 (SSPSSSVPPSSPSPSSTPSSPSASP) has biased composition (low complexity). A compositionally biased stretch (pro residues) spans 482–491 (RRPPSRPPVP). Residues 492-509 (RTCSPAPVSPSVPRAFAS) show a composition bias toward low complexity. Residues 556–571 (PHPERRDEVPAAKRER) show a composition bias toward basic and acidic residues. The helical transmembrane segment at 721–741 (PWYILLFGGLSMSLGLALLGY) threads the bilayer. Topologically, residues 742 to 759 (RVIKTVGVKLVKITPARG) are extracellular. A helical transmembrane segment spans residues 760–780 (FSMELGAAWTVLIFSAIGIPL). The Cytoplasmic segment spans residues 781-837 (STTHCAVGSTVGVGLMEPKHPRRETGDGPVAEGEEPKKRAVQCPVINTASVNWKLFG). The chain crosses the membrane as a helical span at residues 838 to 858 (GVFVSWIITIAFSALVTAALF). The Extracellular portion of the chain corresponds to 859 to 869 (SFAAYSPRMVS).

This sequence belongs to the inorganic phosphate transporter (PiT) (TC 2.A.20) family.

Its subcellular location is the cell membrane. It localises to the vacuole membrane. The protein resides in the cytoplasmic vesicle membrane. It carries out the reaction 2 Na(+)(out) + phosphate(out) = 2 Na(+)(in) + phosphate(in). Sodium-phosphate symporter which preferentially transports the monovalent form of phosphate with a stoichiometry of two sodium ions per phosphate ion. Plays a role in stabilizing the cytosolic pH and osmoregulation. May be required for optimal virulence of parasites in vivo. The chain is Sodium-dependent phosphate transporter from Toxoplasma gondii (strain ATCC 50861 / VEG).